Reading from the N-terminus, the 574-residue chain is 2-succinyl-5-enolpyruvyl-6-hydroxy-3-cyclohexene-1-carboxylate synthase (574 aa).

The protein belongs to the TPP enzyme family. MenD subfamily. As to quaternary structure, homodimer. The cofactor is Mg(2+). Mn(2+) serves as cofactor. Requires thiamine diphosphate as cofactor.

It catalyses the reaction isochorismate + 2-oxoglutarate + H(+) = 5-enolpyruvoyl-6-hydroxy-2-succinyl-cyclohex-3-ene-1-carboxylate + CO2. It participates in quinol/quinone metabolism; 1,4-dihydroxy-2-naphthoate biosynthesis; 1,4-dihydroxy-2-naphthoate from chorismate: step 2/7. It functions in the pathway cofactor biosynthesis; phylloquinone biosynthesis. Catalyzes the thiamine diphosphate-dependent decarboxylation of 2-oxoglutarate and the subsequent addition of the resulting succinic semialdehyde-thiamine pyrophosphate anion to isochorismate to yield 2-succinyl-5-enolpyruvyl-6-hydroxy-3-cyclohexene-1-carboxylate (SEPHCHC). The chain is 2-succinyl-5-enolpyruvyl-6-hydroxy-3-cyclohexene-1-carboxylate synthase from Synechococcus sp. (strain RCC307).